We begin with the raw amino-acid sequence, 261 residues long: 1-(5-phosphoribosyl)-5-[(5-phosphoribosylamino)methylideneamino] imidazole-4-carboxamide isomerase (261 aa).

Belongs to the HisA/HisF family.

The protein resides in the cytoplasm. It carries out the reaction 1-(5-phospho-beta-D-ribosyl)-5-[(5-phospho-beta-D-ribosylamino)methylideneamino]imidazole-4-carboxamide = 5-[(5-phospho-1-deoxy-D-ribulos-1-ylimino)methylamino]-1-(5-phospho-beta-D-ribosyl)imidazole-4-carboxamide. The protein operates within amino-acid biosynthesis; L-histidine biosynthesis; L-histidine from 5-phospho-alpha-D-ribose 1-diphosphate: step 4/9. Its function is as follows. Catalyzes the isomerization of the aminoaldose moiety of ProFAR to the aminoketose of PRFAR. This chain is 1-(5-phosphoribosyl)-5-[(5-phosphoribosylamino)methylideneamino] imidazole-4-carboxamide isomerase, found in Saccharomyces cerevisiae (strain ATCC 204508 / S288c) (Baker's yeast).